The chain runs to 149 residues: UPF0178 protein VFMJ11_0615 (149 aa).

The protein belongs to the UPF0178 family.

The protein is UPF0178 protein VFMJ11_0615 of Aliivibrio fischeri (strain MJ11) (Vibrio fischeri).